The sequence spans 353 residues: Methylthioribose-1-phosphate isomerase (353 aa).

Residues 51-53, Arg-94, and Gln-199 each bind substrate; that span reads RGA. Catalysis depends on Asp-240, which acts as the Proton donor. 250 to 251 lines the substrate pocket; the sequence is NK.

Belongs to the eIF-2B alpha/beta/delta subunits family. MtnA subfamily. In terms of assembly, homodimer.

It catalyses the reaction 5-(methylsulfanyl)-alpha-D-ribose 1-phosphate = 5-(methylsulfanyl)-D-ribulose 1-phosphate. It functions in the pathway amino-acid biosynthesis; L-methionine biosynthesis via salvage pathway; L-methionine from S-methyl-5-thio-alpha-D-ribose 1-phosphate: step 1/6. Functionally, catalyzes the interconversion of methylthioribose-1-phosphate (MTR-1-P) into methylthioribulose-1-phosphate (MTRu-1-P). This chain is Methylthioribose-1-phosphate isomerase, found in Bacillus licheniformis (strain ATCC 14580 / DSM 13 / JCM 2505 / CCUG 7422 / NBRC 12200 / NCIMB 9375 / NCTC 10341 / NRRL NRS-1264 / Gibson 46).